The following is a 33-amino-acid chain: Rhinophrynin-33 (33 aa).

As to expression, expressed by the skin glands.

The protein resides in the secreted. Non-cytotoxic peptide with immunosuppressive and insulinotropic effects. Induces an increased production of the anti-inflammatory cytokine IL-10 and inhibits production of the pro-inflammatory cytokines TNF-alpha and IL-1beta, when incubated with mouse peritoneal cells. Does not display growth-inhibitory activity against the Gram-positive S.epidermidis and Gram-negative E.coli bacteria and against the opportunistic yeast pathogen C.parapsilosis (MIC&gt;128 uM). In addition, it lacks cytotoxic activity against mouse erythrocytes (LC(50)&gt;500 uM) and A549 human non-small cell lung adenocarcinoma cells (LC(50)&gt;100 uM). Moderately stimulates insulin release from rat clonal beta-cells and mouse pancreatic islets. Functionally, non-cytotoxic peptide with immunosuppressive but without insulinotropic effects. Inhibits production of the pro-inflammatory cytokines TNF-alpha, but has no effect on IL-10 and IL-1beta production, when incubated with mouse peritoneal cells. Has no activity of stimulation of insulin release. The protein is Rhinophrynin-33 of Rhinophrynus dorsalis (Mexican burrowing toad).